Here is a 313-residue protein sequence, read N- to C-terminus: Spermatid maturation protein 1 (313 aa).

Residues Ile29–Leu49 form a helical membrane-spanning segment. 4 disordered regions span residues Lys71–His90, Ala97–Asp151, Glu243–Arg263, and Leu291–Arg313. Positions Gly76–Ser85 are enriched in polar residues. Basic residues predominate over residues Thr107–Arg122. Positions Arg263–Tyr289 form a coiled coil. Residues Gly300–Arg313 are compositionally biased toward basic and acidic residues.

It localises to the membrane. The protein resides in the cytoplasm. Its function is as follows. Required for proper cytoplasm removal during spermatogenesis. This chain is Spermatid maturation protein 1 (SPEM1), found in Bos taurus (Bovine).